The sequence spans 501 residues: Glycoprotein 3-alpha-L-fucosyltransferase A (501 aa).

At 1–39 (MGVFSNLRGPKIGLTHEELPVVANGSTSSSSSPSSFKRK) the chain is on the cytoplasmic side. Residues 40 to 60 (VSTFLPICVALVVIIEIGFLC) form a helical; Signal-anchor for type II membrane protein membrane-spanning segment. Residues 61 to 501 (RLDNASLVDT…PCPKFEVVFV (441 aa)) are Lumenal-facing. N-linked (GlcNAc...) asparagine glycosylation is found at Asn64, Asn337, Asn420, and Asn481.

Belongs to the glycosyltransferase 10 family. Mg(2+) serves as cofactor. It depends on Mn(2+) as a cofactor. Post-translationally, glycosylation may be important for enzymatic activity.

The protein resides in the golgi apparatus. It localises to the golgi stack membrane. The catalysed reaction is N(4)-{beta-D-GlcNAc-(1-&gt;2)-alpha-D-Man-(1-&gt;3)-[beta-D-GlcNAc-(1-&gt;2)-alpha-D-Man-(1-&gt;6)]-beta-D-Man-(1-&gt;4)-beta-D-GlcNAc-(1-&gt;4)-beta-D-GlcNAc}-L-asparaginyl-[protein] + GDP-beta-L-fucose = N(4)-{beta-D-GlcNAc-(1-&gt;2)-alpha-D-Man-(1-&gt;3)-[beta-D-GlcNAc-(1-&gt;2)-alpha-D-Man-(1-&gt;6)]-beta-D-Man-(1-&gt;4)-beta-D-GlcNAc-(1-&gt;4)-[alpha-L-Fuc(1-&gt;3)]-beta-D-GlcNAc}-L-asparaginyl-[protein] + GDP + H(+). It functions in the pathway protein modification; protein glycosylation. Inhibited by Cu(2+) and Zn(2+). In terms of biological role, involved in cell wall synthesis. Preferentially catalyzes the addition of fucose in alpha 1-3 linkage to the first GlcNAc residue next to the peptide chains in N-glycans. The protein is Glycoprotein 3-alpha-L-fucosyltransferase A (FUT11) of Arabidopsis thaliana (Mouse-ear cress).